A 556-amino-acid chain; its full sequence is 3-phosphoinositide-dependent protein kinase 1 (556 aa).

Position 9 is a phosphotyrosine; by SRC and INSR (Y9). S25 carries the post-translational modification Phosphoserine. Positions 26–80 (PSMVRTQTESSTPPGIPGGSRQGPAMDGTAAEPRPGAGSLQHAQPPPQPRKKRPE) are disordered. Residues 28-38 (MVRTQTESSTP) are compositionally biased toward polar residues. One can recognise a Protein kinase domain in the interval 82–342 (FKFGKILGEG…YGPLKAHPFF (261 aa)). ATP contacts are provided by residues 92-94 (SFS) and K111. Residues 113–157 (LEKRHIIKENKVPYVTRERDVMSRLDHPFFVKLYFTFQDDEKLYF) are PIF-pocket. Residues 160–162 (SYA) and E166 contribute to the ATP site. D205 (proton acceptor) is an active-site residue. E209 and D223 together coordinate ATP. S241 is subject to Phosphoserine; by autocatalysis. N6-acetyllysine is present on K304. T354 bears the Phosphothreonine; by MELK mark. 2 positions are modified to phosphotyrosine; by SRC and INSR: Y373 and Y376. Position 393 is a phosphoserine (S393). S394 carries the post-translational modification Phosphoserine; by MAP3K5. S396 bears the Phosphoserine mark. S398 bears the Phosphoserine; by MAP3K5 mark. S410 carries the phosphoserine modification. Residues 459 to 550 (KMGPVDKRKG…EVWRQRYQSH (92 aa)) enclose the PH domain. S501 bears the Phosphoserine; by PKC/PRKCQ mark. The residue at position 513 (T513) is a Phosphothreonine; by autocatalysis. The residue at position 529 (S529) is a Phosphoserine; by PKC/PRKCQ.

The protein belongs to the protein kinase superfamily. AGC Ser/Thr protein kinase family. PDPK1 subfamily. In terms of assembly, homodimer in its autoinhibited state. Active as monomer. Interacts with NPRL2, PPARG, PAK1, PTK2B, GRB14, PKN1 (via C-terminus), STRAP and IKKB. The Tyr-9 phosphorylated form interacts with SRC, RASA1 and CRK (via their SH2 domains). Interacts with SGK3 in a phosphorylation-dependent manner. The tyrosine-phosphorylated form interacts with PTPN6. The Ser-241 phosphorylated form interacts with YWHAH and YWHAQ. Binds INSR in response to insulin. Interacts (via PH domain) with SMAD3, SMAD4 and SMAD7. Interacts with PKN2; the interaction stimulates PDPK1 autophosphorylation, its PI(3,4,5)P3-dependent kinase activity toward 'Ser-473' of AKT1 but also activates its kinase activity toward PRKCD and PRKCZ. In terms of processing, phosphorylation on Ser-241 in the activation loop is required for full activity. PDPK1 itself can autophosphorylate Ser-241, leading to its own activation. Autophosphorylation is inhibited by the apoptotic C-terminus cleavage product of PKN2. Tyr-9 phosphorylation is critical for stabilization of both PDPK1 and the PDPK1/SRC complex via HSP90-mediated protection of PDPK1 degradation. Angiotensin II stimulates the tyrosine phosphorylation of PDPK1 in vascular smooth muscle in a calcium- and SRC-dependent manner. Phosphorylated on Tyr-9, Tyr-373 and Tyr-376 by INSR in response to insulin. Palmitate negatively regulates autophosphorylation at Ser-241 and palmitate-induced phosphorylation at Ser-529 and Ser-501 by PKC/PRKCQ negatively regulates its ability to phosphorylate PKB/AKT1. Phosphorylation at Thr-354 by MELK partially inhibits kinase activity, the inhibition is cooperatively enhanced by phosphorylation at Ser-394 and Ser-398 by MAP3K5. Autophosphorylated; autophosphorylation is inhibited by the apoptotic C-terminus cleavage product of PKN2. Post-translationally, monoubiquitinated in the kinase domain, deubiquitinated by USP4. In terms of tissue distribution, appears to be expressed ubiquitously. The Tyr-9 phosphorylated form is markedly increased in diseased tissue compared with normal tissue from lung, liver, colon and breast.

The protein localises to the cytoplasm. It localises to the nucleus. Its subcellular location is the cell membrane. The protein resides in the cell junction. It is found in the focal adhesion. It catalyses the reaction L-seryl-[protein] + ATP = O-phospho-L-seryl-[protein] + ADP + H(+). The enzyme catalyses L-threonyl-[protein] + ATP = O-phospho-L-threonyl-[protein] + ADP + H(+). Its activity is regulated as follows. Homodimerization regulates its activity by maintaining the kinase in an autoinhibitory conformation. NPRL2 down-regulates its activity by interfering with tyrosine phosphorylation at the Tyr-9, Tyr-373 and Tyr-376 residues. The 14-3-3 protein YWHAQ acts as a negative regulator by association with the residues surrounding the Ser-241 residue. STRAP positively regulates its activity by enhancing its autophosphorylation and by stimulating its dissociation from YWHAQ. SMAD2, SMAD3, SMAD4 and SMAD7 also positively regulate its activity by stimulating its dissociation from YWHAQ. Activated by phosphorylation on Tyr-9, Tyr-373 and Tyr-376 by INSR in response to insulin. Its function is as follows. Serine/threonine kinase which acts as a master kinase, phosphorylating and activating a subgroup of the AGC family of protein kinases. Its targets include: protein kinase B (PKB/AKT1, PKB/AKT2, PKB/AKT3), p70 ribosomal protein S6 kinase (RPS6KB1), p90 ribosomal protein S6 kinase (RPS6KA1, RPS6KA2 and RPS6KA3), cyclic AMP-dependent protein kinase (PRKACA), protein kinase C (PRKCD and PRKCZ), serum and glucocorticoid-inducible kinase (SGK1, SGK2 and SGK3), p21-activated kinase-1 (PAK1), TSSK3, protein kinase PKN (PKN1 and PKN2). Plays a central role in the transduction of signals from insulin by providing the activating phosphorylation to PKB/AKT1, thus propagating the signal to downstream targets controlling cell proliferation and survival, as well as glucose and amino acid uptake and storage. Negatively regulates the TGF-beta-induced signaling by: modulating the association of SMAD3 and SMAD7 with TGF-beta receptor, phosphorylating SMAD2, SMAD3, SMAD4 and SMAD7, preventing the nuclear translocation of SMAD3 and SMAD4 and the translocation of SMAD7 from the nucleus to the cytoplasm in response to TGF-beta. Activates PPARG transcriptional activity and promotes adipocyte differentiation. Activates the NF-kappa-B pathway via phosphorylation of IKKB. The tyrosine phosphorylated form is crucial for the regulation of focal adhesions by angiotensin II. Controls proliferation, survival, and growth of developing pancreatic cells. Participates in the regulation of Ca(2+) entry and Ca(2+)-activated K(+) channels of mast cells. Essential for the motility of vascular endothelial cells (ECs) and is involved in the regulation of their chemotaxis. Plays a critical role in cardiac homeostasis by serving as a dual effector for cell survival and beta-adrenergic response. Plays an important role during thymocyte development by regulating the expression of key nutrient receptors on the surface of pre-T cells and mediating Notch-induced cell growth and proliferative responses. Provides negative feedback inhibition to toll-like receptor-mediated NF-kappa-B activation in macrophages. In terms of biological role, catalytically inactive. The protein is 3-phosphoinositide-dependent protein kinase 1 (PDPK1) of Homo sapiens (Human).